The sequence spans 372 residues: DNA replication and repair protein RecF (372 aa).

An ATP-binding site is contributed by 30 to 37; the sequence is GDNGQGKT.

The protein belongs to the RecF family.

The protein localises to the cytoplasm. Its function is as follows. The RecF protein is involved in DNA metabolism; it is required for DNA replication and normal SOS inducibility. RecF binds preferentially to single-stranded, linear DNA. It also seems to bind ATP. This is DNA replication and repair protein RecF from Ruminiclostridium cellulolyticum (strain ATCC 35319 / DSM 5812 / JCM 6584 / H10) (Clostridium cellulolyticum).